The primary structure comprises 287 residues: DegV domain-containing protein DR_0500 (287 aa).

A DegV domain is found at 7-280; the sequence is FAVVTDGGLD…PRALGVAAAP (274 aa). 2 residues coordinate hexadecanoate: serine 62 and serine 93.

Functionally, may bind long-chain fatty acids, such as palmitate, and may play a role in lipid transport or fatty acid metabolism. The sequence is that of DegV domain-containing protein DR_0500 from Deinococcus radiodurans (strain ATCC 13939 / DSM 20539 / JCM 16871 / CCUG 27074 / LMG 4051 / NBRC 15346 / NCIMB 9279 / VKM B-1422 / R1).